Here is a 2067-residue protein sequence, read N- to C-terminus: Non-reducing polyketide synthase PKS12 (2067 aa).

The segment at 4–241 is N-terminal acylcarrier protein transacylase (SAT) domain; it reads FVFGDQSTRF…LPVPIYAPYH (238 aa). Residues 350-373 are disordered; the sequence is NSMGPKASTSHSSAETQTESSSKN. Residues 356–373 are compositionally biased toward polar residues; that stretch reads ASTSHSSAETQTESSSKN. Positions 373-808 constitute a Ketosynthase family 3 (KS3) domain; that stretch reads NSKIAIVAMS…GGNSAVLLQD (436 aa). Catalysis depends on for beta-ketoacyl synthase activity residues cysteine 545, histidine 680, and histidine 725. Residues 912-1199 form a malonyl-CoA:ACP transacylase (MAT) domain region; sequence FVFSGQGAQY…VVCSTFLKSS (288 aa). Serine 1001 serves as the catalytic For acyl/malonyl transferase activity. The segment at 1297–1433 is N-terminal hotdog fold; the sequence is QKILQETSLD…CELRLEHPSQ (137 aa). The 310-residue stretch at 1297 to 1606 folds into the PKS/mFAS DH domain; the sequence is QKILQETSLD…FQGLPRRVLN (310 aa). Catalysis depends on histidine 1329, which acts as the Proton acceptor; for dehydratase activity. Residues 1329–1604 form a product template (PT) domain region; it reads HRVNGVKVCT…ITFQGLPRRV (276 aa). Positions 1460 to 1606 are C-terminal hotdog fold; it reads LDSMLATGMV…FQGLPRRVLN (147 aa). Aspartate 1519 functions as the Proton donor; for dehydratase activity in the catalytic mechanism. The segment at 1619–1648 is disordered; sequence APMGRRDVPPSRMDVPPVRSGEGPPTSAPT. The Carrier domain maps to 1660-1738; the sequence is TSMDSRLRPL…SFKLFLGLVD (79 aa). The residue at position 1698 (serine 1698) is an O-(pantetheine 4'-phosphoryl)serine. The disordered stretch occupies residues 1742 to 1779; sequence KSSSGSDGSGRSSPAPGIESGATTPPMSEEDQDKIVSS. Residues 1743–1754 show a composition bias toward low complexity; it reads SSSGSDGSGRSS. The interval 1781-2065 is claisen cyclase domain; the sequence is SLHQFQASST…YVSAFLARAL (285 aa). Serine 1875 (for Claisen cyclase activity) is an active-site residue.

It carries out the reaction 6 malonyl-CoA + acetyl-CoA + 6 H(+) = naphtopyrone YWA1 + 6 CO2 + 7 CoA + H2O. The protein operates within pigment biosynthesis. Functionally, non-reducing polyketide synthase; part of the gene cluster that mediates the biosynthesis of aurofusarin, a red mycelium pigment which is acting as a mycotoxin. The first step is performed by the polyketide synthase which condenses one acetyl-CoA and 6 malonyl-CoA units to form the first intermediate, the cyclic heptaketide and yellow pigment YWA1. The C2 hydroxyl group in the pyrone ring of YWA1 is probably formed during ring closure by an aldol-type cyclization reaction. The dehydratase aurZ then acts as the first tailoring enzyme in the aurofusarin biosynthetic pathway by converting YWA1 to nor-rubrofusarin. Nor-rubrofusarin is then methylated to rubrofusarin by the O-methyltransferase aurJ. Rubrofusarin is then transported across the plasma membrane by the rubrofusarin-specific pump aurT for further enzymatic processing by the extracellular complex composed of GIP1, aurF, aurO and aurS to yield aurofusarin. This is Non-reducing polyketide synthase PKS12 from Gibberella zeae (strain ATCC MYA-4620 / CBS 123657 / FGSC 9075 / NRRL 31084 / PH-1) (Wheat head blight fungus).